Here is a 253-residue protein sequence, read N- to C-terminus: Imidazole glycerol phosphate synthase subunit HisF (253 aa).

Residues Asp-11 and Asp-130 contribute to the active site.

This sequence belongs to the HisA/HisF family. As to quaternary structure, heterodimer of HisH and HisF.

Its subcellular location is the cytoplasm. It carries out the reaction 5-[(5-phospho-1-deoxy-D-ribulos-1-ylimino)methylamino]-1-(5-phospho-beta-D-ribosyl)imidazole-4-carboxamide + L-glutamine = D-erythro-1-(imidazol-4-yl)glycerol 3-phosphate + 5-amino-1-(5-phospho-beta-D-ribosyl)imidazole-4-carboxamide + L-glutamate + H(+). It participates in amino-acid biosynthesis; L-histidine biosynthesis; L-histidine from 5-phospho-alpha-D-ribose 1-diphosphate: step 5/9. Functionally, IGPS catalyzes the conversion of PRFAR and glutamine to IGP, AICAR and glutamate. The HisF subunit catalyzes the cyclization activity that produces IGP and AICAR from PRFAR using the ammonia provided by the HisH subunit. The protein is Imidazole glycerol phosphate synthase subunit HisF of Ruminiclostridium cellulolyticum (strain ATCC 35319 / DSM 5812 / JCM 6584 / H10) (Clostridium cellulolyticum).